A 137-amino-acid chain; its full sequence is Ribonuclease VapC18 (137 aa).

One can recognise a PINc domain in the interval 4–126 (CVDTSAWHHA…YDRVAAITGQ (123 aa)). Mg(2+)-binding residues include Asp-6 and Asp-96.

This sequence belongs to the PINc/VapC protein family. Requires Mg(2+) as cofactor.

Toxic component of a type II toxin-antitoxin (TA) system. An RNase. The cognate antitoxin is VapB18. The polypeptide is Ribonuclease VapC18 (Mycobacterium tuberculosis (strain ATCC 25618 / H37Rv)).